A 652-amino-acid chain; its full sequence is NADH-ubiquinone oxidoreductase chain 5 (652 aa).

16 helical membrane passes run 1-21 (MYLS…FLGR), 30-50 (LITC…FIEV), 72-92 (IIWG…VLII), 119-139 (LFTF…MFVG), 140-160 (WEGV…RIAA), 177-197 (FLTI…YSTV), 200-220 (LAPY…LIGA), 241-261 (TPVS…YLLM), 274-294 (LLLC…IGLF), 301-319 (VIAY…AIGL), 331-351 (NHAF…HAVA), 365-385 (FLPL…AFPF), 403-423 (FSFS…FTTL), 454-474 (LFLT…GFIT), 505-525 (FAVP…FSII), and 619-639 (LYIL…FNFL).

This sequence belongs to the complex I subunit 5 family.

It is found in the mitochondrion inner membrane. The enzyme catalyses a ubiquinone + NADH + 5 H(+)(in) = a ubiquinol + NAD(+) + 4 H(+)(out). Functionally, core subunit of the mitochondrial membrane respiratory chain NADH dehydrogenase (Complex I) that is believed to belong to the minimal assembly required for catalysis. Complex I functions in the transfer of electrons from NADH to the respiratory chain. The immediate electron acceptor for the enzyme is believed to be ubiquinone. This chain is NADH-ubiquinone oxidoreductase chain 5 (ND5), found in Podospora anserina (strain S / ATCC MYA-4624 / DSM 980 / FGSC 10383) (Pleurage anserina).